The sequence spans 261 residues: Endomucin (261 aa).

The signal sequence occupies residues 1-18 (MELLQVTILFLLPSICSS). Residues Asn19, Asn28, Asn98, and Asn104 are each glycosylated (N-linked (GlcNAc...) asparagine). The Extracellular segment spans residues 19-190 (NSTGVLEAAN…TSATSRSYSS (172 aa)). 2 stretches are compositionally biased toward polar residues: residues 118 to 134 (TLQSSKPKTETQSSIKT) and 146 to 171 (ASPSKTGTLTSIPVTIPENTSQSQVI). The tract at residues 118 to 183 (TLQSSKPKTE…EGGKNASTSA (66 aa)) is disordered. N-linked (GlcNAc...) asparagine glycans are attached at residues Asn164 and Asn178. Residues 191–211 (IILPVVIALIVITLSVFVLVG) form a helical membrane-spanning segment. At 212–261 (LYRMCWKADPGTPENGNDQPQSDKESVKLLTVKTISHESGEHSAQGKTKN) the chain is on the cytoplasmic side. Residue Ser237 is modified to Phosphoserine.

Post-translationally, highly O-glycosylated. Sialic acid-rich glycoprotein. In terms of tissue distribution, expressed in heart, kidney and lung.

The protein localises to the cell membrane. It localises to the membrane. It is found in the secreted. Functionally, endothelial sialomucin, also called endomucin or mucin-like sialoglycoprotein, which interferes with the assembly of focal adhesion complexes and inhibits interaction between cells and the extracellular matrix. The sequence is that of Endomucin (EMCN) from Homo sapiens (Human).